The primary structure comprises 603 residues: UvrABC system protein C (603 aa).

One can recognise a GIY-YIG domain in the interval 15 to 92 (DQPGCYLMKN…IQKHQPYYNI (78 aa)). Residues 197–232 (AQVKKQLTARMERAAGQLEFERAAEIRDQLHYIEVT) enclose the UVR domain.

The protein belongs to the UvrC family. In terms of assembly, interacts with UvrB in an incision complex.

Its subcellular location is the cytoplasm. Functionally, the UvrABC repair system catalyzes the recognition and processing of DNA lesions. UvrC both incises the 5' and 3' sides of the lesion. The N-terminal half is responsible for the 3' incision and the C-terminal half is responsible for the 5' incision. The polypeptide is UvrABC system protein C (Limosilactobacillus fermentum (strain NBRC 3956 / LMG 18251) (Lactobacillus fermentum)).